The sequence spans 128 residues: Small ribosomal subunit protein uS11 (128 aa).

Belongs to the universal ribosomal protein uS11 family. In terms of assembly, part of the 30S ribosomal subunit. Interacts with proteins S7 and S18. Binds to IF-3.

Located on the platform of the 30S subunit, it bridges several disparate RNA helices of the 16S rRNA. Forms part of the Shine-Dalgarno cleft in the 70S ribosome. This Aster yellows witches'-broom phytoplasma (strain AYWB) protein is Small ribosomal subunit protein uS11.